The primary structure comprises 342 residues: Ketol-acid reductoisomerase (NADP(+)) (342 aa).

Residues 2 to 181 (VKVYYNGDIK…GGARAGVLET (180 aa)) enclose the KARI N-terminal Rossmann domain. NADP(+) contacts are provided by residues 25–28 (YGSQ), arginine 48, serine 52, and 82–85 (DEQQ). Histidine 107 is an active-site residue. Glycine 133 is an NADP(+) binding site. The KARI C-terminal knotted domain occupies 182-327 (TFKEETETDL…RQLREMMPFV (146 aa)). The Mg(2+) site is built by aspartate 190, glutamate 194, glutamate 226, and glutamate 230. Serine 251 is a substrate binding site.

The protein belongs to the ketol-acid reductoisomerase family. Mg(2+) serves as cofactor.

The catalysed reaction is (2R)-2,3-dihydroxy-3-methylbutanoate + NADP(+) = (2S)-2-acetolactate + NADPH + H(+). It catalyses the reaction (2R,3R)-2,3-dihydroxy-3-methylpentanoate + NADP(+) = (S)-2-ethyl-2-hydroxy-3-oxobutanoate + NADPH + H(+). Its pathway is amino-acid biosynthesis; L-isoleucine biosynthesis; L-isoleucine from 2-oxobutanoate: step 2/4. It functions in the pathway amino-acid biosynthesis; L-valine biosynthesis; L-valine from pyruvate: step 2/4. Involved in the biosynthesis of branched-chain amino acids (BCAA). Catalyzes an alkyl-migration followed by a ketol-acid reduction of (S)-2-acetolactate (S2AL) to yield (R)-2,3-dihydroxy-isovalerate. In the isomerase reaction, S2AL is rearranged via a Mg-dependent methyl migration to produce 3-hydroxy-3-methyl-2-ketobutyrate (HMKB). In the reductase reaction, this 2-ketoacid undergoes a metal-dependent reduction by NADPH to yield (R)-2,3-dihydroxy-isovalerate. The chain is Ketol-acid reductoisomerase (NADP(+)) from Bacillus velezensis (strain DSM 23117 / BGSC 10A6 / LMG 26770 / FZB42) (Bacillus amyloliquefaciens subsp. plantarum).